We begin with the raw amino-acid sequence, 304 residues long: Recombination-associated protein RdgC (304 aa).

The protein belongs to the RdgC family.

Its subcellular location is the cytoplasm. The protein resides in the nucleoid. In terms of biological role, may be involved in recombination. This chain is Recombination-associated protein RdgC, found in Dechloromonas aromatica (strain RCB).